Reading from the N-terminus, the 372-residue chain is ATP phosphoribosyltransferase regulatory subunit (372 aa).

Belongs to the class-II aminoacyl-tRNA synthetase family. HisZ subfamily. Heteromultimer composed of HisG and HisZ subunits.

The protein resides in the cytoplasm. The protein operates within amino-acid biosynthesis; L-histidine biosynthesis; L-histidine from 5-phospho-alpha-D-ribose 1-diphosphate: step 1/9. Functionally, required for the first step of histidine biosynthesis. May allow the feedback regulation of ATP phosphoribosyltransferase activity by histidine. The protein is ATP phosphoribosyltransferase regulatory subunit of Allorhizobium ampelinum (strain ATCC BAA-846 / DSM 112012 / S4) (Agrobacterium vitis (strain S4)).